The primary structure comprises 246 residues: Bis(5'-nucleosyl)-tetraphosphatase PrpE [asymmetrical] (246 aa).

This sequence belongs to the PrpE family. Ni(2+) serves as cofactor.

It carries out the reaction P(1),P(4)-bis(5'-guanosyl) tetraphosphate + H2O = GMP + GTP + 2 H(+). Asymmetrically hydrolyzes Ap4p to yield AMP and ATP. This is Bis(5'-nucleosyl)-tetraphosphatase PrpE [asymmetrical] from Bacillus anthracis (strain A0248).